Reading from the N-terminus, the 434-residue chain is ATP-dependent protease ATPase subunit HslU (434 aa).

ATP is bound by residues Val-18, 60–65 (GVGKTE), Asp-247, Glu-312, and Arg-384.

It belongs to the ClpX chaperone family. HslU subfamily. A double ring-shaped homohexamer of HslV is capped on each side by a ring-shaped HslU homohexamer. The assembly of the HslU/HslV complex is dependent on binding of ATP.

It is found in the cytoplasm. Functionally, ATPase subunit of a proteasome-like degradation complex; this subunit has chaperone activity. The binding of ATP and its subsequent hydrolysis by HslU are essential for unfolding of protein substrates subsequently hydrolyzed by HslV. HslU recognizes the N-terminal part of its protein substrates and unfolds these before they are guided to HslV for hydrolysis. This is ATP-dependent protease ATPase subunit HslU from Hyphomonas neptunium (strain ATCC 15444).